Reading from the N-terminus, the 358-residue chain is MSENSTIVSNTANLVKFLNLDQKGSILAEYIWIDGANGVRSKTKTLFKKPSSVEDLPEWNFDGSSTGQAPGEDSDIYLRPVAIFPDPFRMGDNILVLAECWNADGSPNKFNHRHECAKIMEAHKDQKPWFGLEQEYTLFDLYGNPYGWPKGGFPGPQGPYYCGVGTGKVYCRDIVEAHYKACLFAGIKISGINAEVLPSQWEFQVGPCVGIEMGDHLWISRYLLHRVAEEFGVKISFHPKPIPGDWNGSGLHTNVSTQAMRDEGGMKAIEEAIQKLSTRHAEHIAVYGDDNTLRLTGRHETGNIDAFSYGVADRGSSIRIPRSCAKEGKGYFEDRRPASNACPYQITGIMMETICGGI.

A GS beta-grasp domain is found at 26-105 (ILAEYIWIDG…VLAECWNADG (80 aa)). The region spanning 112-358 (HRHECAKIME…IMMETICGGI (247 aa)) is the GS catalytic domain.

It belongs to the glutamine synthetase family. Homooctamer.

The protein resides in the cytoplasm. It catalyses the reaction L-glutamate + NH4(+) + ATP = L-glutamine + ADP + phosphate + H(+). In Tuber borchii (White truffle), this protein is Glutamine synthetase (GLN1).